The following is a 284-amino-acid chain: Protein phosphatase 1 regulatory subunit 3B (284 aa).

The PP1-binding motif motif lies at 61–64 (RVSF). Residues 124–232 (RNRLQTNHVC…SNKGKNYRIT (109 aa)) form the CBM21 domain. S260 carries the post-translational modification Phosphoserine.

In terms of assembly, interacts with glycogen, PPP1CC catalytic subunit of PP1 and PYGL. Associates with glycogen particles. Forms complexes with debranching enzyme, glycogen phosphorylase, glycogen synthase and phosphorylase kinase which is necessary for its regulation of PP1 activity. As to expression, highly expressed in liver. Moderately expressed in kidney, heart, testis, spleen and lung. Weakly expressed in skeletal muscle (at protein level). Expressed predominantly in liver. Expressed moderately in heart. Expressed weakly in lung, kidney, spleen and skeletal muscle.

In terms of biological role, acts as a glycogen-targeting subunit for phosphatase PP1. Facilitates interaction of the PP1 with enzymes of the glycogen metabolism and regulates its activity. Suppresses the rate at which PP1 dephosphorylates (inactivates) glycogen phosphorylase and enhances the rate at which it activates glycogen synthase and therefore limits glycogen breakdown. Its activity is inhibited by PYGL, resulting in inhibition of the glycogen synthase and glycogen phosphorylase phosphatase activities of PP1. Dramatically increases basal and insulin-stimulated glycogen synthesis upon overexpression in hepatocytes. The protein is Protein phosphatase 1 regulatory subunit 3B (Ppp1r3b) of Rattus norvegicus (Rat).